Consider the following 202-residue polypeptide: Recombination protein RecR (202 aa).

The C4-type zinc finger occupies 61-76 (CARCNSFTEDEVCATC). The Toprim domain occupies 84–179 (GLLCIVETPA…KVTRLARGVP (96 aa)).

This sequence belongs to the RecR family.

Functionally, may play a role in DNA repair. It seems to be involved in an RecBC-independent recombinational process of DNA repair. It may act with RecF and RecO. The polypeptide is Recombination protein RecR (Bordetella pertussis (strain Tohama I / ATCC BAA-589 / NCTC 13251)).